We begin with the raw amino-acid sequence, 395 residues long: MTKTLAVNAGSSSMKWQMYEMPEEKVLAKGLIERIGLKDSIVTVKFGEQKEERVFDIPNHTEAVEVLLEDLKRLKIVEEFTEITGVGHRVVAGGEIFQKSTVVTPEVLQQVKDLSALAPLHNPANAAGIEAFLNLLPDATSVVVFDTAFHTTMPEKAFRYPLPKKYYTDYAVRKYGAHGTSHMYVSQEAAKLLGKPIEETKIITAHIGNGASLTAVKGGKSIDTSMGFTPLAGVMMGTRTGEMDPSVFPYLIENDSELKDAQGVVDMMNKESGLYGVSGISSDMRDIIAAKDTDTDAKLAFEMYVDRIQKFIGQYLAVLNGADALVFTAGIGENSVPVREAILSGLTWFGIEVDPEKNVFGVEGEISTPHSRVKVFVIPTDEELVIARDVEALKK.

Residue asparagine 8 participates in Mg(2+) binding. Lysine 15 is a binding site for ATP. Arginine 89 contributes to the substrate binding site. The Proton donor/acceptor role is filled by aspartate 146. ATP is bound by residues 206-210 (HIGNG), 283-285 (DMR), and 330-334 (GIGEN). Glutamate 382 serves as a coordination point for Mg(2+).

This sequence belongs to the acetokinase family. As to quaternary structure, homodimer. The cofactor is Mg(2+). Mn(2+) is required as a cofactor.

The protein resides in the cytoplasm. The enzyme catalyses acetate + ATP = acetyl phosphate + ADP. The protein operates within metabolic intermediate biosynthesis; acetyl-CoA biosynthesis; acetyl-CoA from acetate: step 1/2. Catalyzes the formation of acetyl phosphate from acetate and ATP. Can also catalyze the reverse reaction. This chain is Acetate kinase 1, found in Lactococcus lactis subsp. lactis (strain IL1403) (Streptococcus lactis).